The chain runs to 358 residues: Carbamoyl phosphate synthase small chain (358 aa).

The tract at residues 1-168 (MKRLLLLEDG…TKLAYASPGV (168 aa)) is CPSase. Residues serine 45, glycine 219, and glycine 221 each coordinate L-glutamine. The 187-residue stretch at 171–357 (NIVLVDFGLK…INMIDDFQQK (187 aa)) folds into the Glutamine amidotransferase type-1 domain. Catalysis depends on cysteine 246, which acts as the Nucleophile. 5 residues coordinate L-glutamine: methionine 247, glutamine 250, asparagine 288, glycine 290, and tyrosine 291. Catalysis depends on residues histidine 330 and aspartate 332.

The protein belongs to the CarA family. Composed of two chains; the small (or glutamine) chain promotes the hydrolysis of glutamine to ammonia, which is used by the large (or ammonia) chain to synthesize carbamoyl phosphate. Tetramer of heterodimers (alpha,beta)4.

The catalysed reaction is hydrogencarbonate + L-glutamine + 2 ATP + H2O = carbamoyl phosphate + L-glutamate + 2 ADP + phosphate + 2 H(+). It carries out the reaction L-glutamine + H2O = L-glutamate + NH4(+). The protein operates within amino-acid biosynthesis; L-arginine biosynthesis; carbamoyl phosphate from bicarbonate: step 1/1. Its pathway is pyrimidine metabolism; UMP biosynthesis via de novo pathway; (S)-dihydroorotate from bicarbonate: step 1/3. Its function is as follows. Small subunit of the glutamine-dependent carbamoyl phosphate synthetase (CPSase). CPSase catalyzes the formation of carbamoyl phosphate from the ammonia moiety of glutamine, carbonate, and phosphate donated by ATP, constituting the first step of 2 biosynthetic pathways, one leading to arginine and/or urea and the other to pyrimidine nucleotides. The small subunit (glutamine amidotransferase) binds and cleaves glutamine to supply the large subunit with the substrate ammonia. The protein is Carbamoyl phosphate synthase small chain of Streptococcus agalactiae serotype III (strain NEM316).